Consider the following 236-residue polypeptide: Carbonyl reductase family member 4 (236 aa).

NADP(+) contacts are provided by residues 11 to 14 (SRGI), 34 to 35 (RD), aspartate 55, and 82 to 84 (SAG). Serine 134 lines the substrate pocket. NADP(+) is bound by residues tyrosine 147, lysine 151, and 180 to 182 (IHT). The active-site Proton acceptor is tyrosine 147.

This sequence belongs to the short-chain dehydrogenases/reductases (SDR) family. In terms of assembly, homotetramer (in vitro). Heterotetramer with HSD17B8; contains two molecules each of HSD17B8 and CBR4.

It localises to the mitochondrion matrix. Its pathway is lipid metabolism; fatty acid biosynthesis. Its function is as follows. The heterotetramer with HSD17B8 has NADH-dependent 3-ketoacyl-acyl carrier protein reductase activity, and thereby plays a role in mitochondrial fatty acid biosynthesis. Within the heterotetramer, HSD17B8 binds NADH; CBR4 binds NADPD. The homotetramer has NADPH-dependent quinone reductase activity. Both homotetramer and the heterotetramer have broad in vitro substrate specificity and can reduce 9,10-phenanthrenequinone, 1,4-benzoquinone and various other o-quinones and p-quinones. The protein is Carbonyl reductase family member 4 (cbr4) of Xenopus tropicalis (Western clawed frog).